Reading from the N-terminus, the 45-residue chain is Large ribosomal subunit protein bL34 (45 aa).

Over residues 1-10 the composition is skewed to basic and acidic residues; the sequence is MTKRTLEGTN. The interval 1 to 27 is disordered; sequence MTKRTLEGTNRKRKRTSGFRARMRSAT. The segment covering 11–23 has biased composition (basic residues); the sequence is RKRKRTSGFRARM.

Belongs to the bacterial ribosomal protein bL34 family.

The polypeptide is Large ribosomal subunit protein bL34 (Synechococcus elongatus (strain ATCC 33912 / PCC 7942 / FACHB-805) (Anacystis nidulans R2)).